A 145-amino-acid chain; its full sequence is Large ribosomal subunit protein uL11 (145 aa).

The protein belongs to the universal ribosomal protein uL11 family. As to quaternary structure, part of the ribosomal stalk of the 50S ribosomal subunit. Interacts with L10 and the large rRNA to form the base of the stalk. L10 forms an elongated spine to which L12 dimers bind in a sequential fashion forming a multimeric L10(L12)X complex. In terms of processing, one or more lysine residues are methylated.

Functionally, forms part of the ribosomal stalk which helps the ribosome interact with GTP-bound translation factors. The chain is Large ribosomal subunit protein uL11 from Rickettsia peacockii (strain Rustic).